Reading from the N-terminus, the 518-residue chain is Probable cyclic di-GMP phosphodiesterase PdeN (518 aa).

The next 2 membrane-spanning stretches (helical) occupy residues 16–36 (CIVAGVMIAILVSCLQFLVAW) and 236–256 (VWYAFLLGGMSGTVVGLLCYY). One can recognise an EAL domain in the interval 261–514 (RMRPGREIMT…DFVRWLKKPY (254 aa)).

The protein resides in the cell inner membrane. The catalysed reaction is 3',3'-c-di-GMP + H2O = 5'-phosphoguanylyl(3'-&gt;5')guanosine + H(+). Functionally, phosphodiesterase (PDE) that catalyzes the hydrolysis of cyclic-di-GMP (c-di-GMP) to 5'-pGpG. The polypeptide is Probable cyclic di-GMP phosphodiesterase PdeN (Escherichia coli (strain K12)).